Here is a 248-residue protein sequence, read N- to C-terminus: mRNA-decapping protein OPG122 (248 aa).

Residues His45–Lys227 enclose the Nudix hydrolase domain. Residues Gly125–Asn147 carry the Nudix box motif.

The protein belongs to the Nudix hydrolase family. In terms of assembly, interacts with the late transcription elongation factor VLTF-4/OPG110. Interacts with the late transcription factors VLTF-1. Requires Mg(2+) as cofactor. Mn(2+) is required as a cofactor.

It localises to the host mitochondrion. Functionally, acts with RNA polymerase to initiate transcription from late gene promoters. This chain is mRNA-decapping protein OPG122 (OPG122), found in Cynomys gunnisoni (Gunnison's prairie dog).